A 606-amino-acid chain; its full sequence is Sulfite reductase [NADPH] flavoprotein alpha-component (606 aa).

In terms of domain architecture, Flavodoxin-like spans 64–202 (VTLISASQTG…QAQQWRQQVV (139 aa)). FMN is bound by residues 70–75 (SQTGNA), 117–120 (STQG), and 153–162 (LGDTSYEHFC). Positions 212 to 234 (QSTAPTQSTTPAAAAITSGGTTT) are enriched in low complexity. The interval 212–235 (QSTAPTQSTTPAAAAITSGGTTTV) is disordered. Residues 241–455 (TAPLTAQLSV…IEHNDNFRLP (215 aa)) enclose the FAD-binding FR-type domain. Residues Thr329, Lys363, 393–396 (RLYS), 411–413 (TVG), Tyr417, and 426–429 (GGAS) each bind FAD. NADP(+) is bound by residues 526–527 (SR), 532–536 (KIYVQ), and Asp568. Tyr606 serves as a coordination point for FAD.

It belongs to the NADPH-dependent sulphite reductase flavoprotein subunit CysJ family. In the N-terminal section; belongs to the flavodoxin family. This sequence in the C-terminal section; belongs to the flavoprotein pyridine nucleotide cytochrome reductase family. Alpha(8)-beta(8). The alpha component is a flavoprotein, the beta component is a hemoprotein. It depends on FAD as a cofactor. Requires FMN as cofactor.

It catalyses the reaction hydrogen sulfide + 3 NADP(+) + 3 H2O = sulfite + 3 NADPH + 4 H(+). The protein operates within sulfur metabolism; hydrogen sulfide biosynthesis; hydrogen sulfide from sulfite (NADPH route): step 1/1. In terms of biological role, component of the sulfite reductase complex that catalyzes the 6-electron reduction of sulfite to sulfide. This is one of several activities required for the biosynthesis of L-cysteine from sulfate. The flavoprotein component catalyzes the electron flow from NADPH -&gt; FAD -&gt; FMN to the hemoprotein component. The protein is Sulfite reductase [NADPH] flavoprotein alpha-component of Yersinia pestis bv. Antiqua (strain Antiqua).